The primary structure comprises 201 residues: Peptidyl-tRNA hydrolase (201 aa).

Y14 provides a ligand contact to tRNA. H19 serves as the catalytic Proton acceptor. TRNA contacts are provided by Y64, N66, and N112.

This sequence belongs to the PTH family. Monomer.

The protein localises to the cytoplasm. The enzyme catalyses an N-acyl-L-alpha-aminoacyl-tRNA + H2O = an N-acyl-L-amino acid + a tRNA + H(+). Hydrolyzes ribosome-free peptidyl-tRNAs (with 1 or more amino acids incorporated), which drop off the ribosome during protein synthesis, or as a result of ribosome stalling. In terms of biological role, catalyzes the release of premature peptidyl moieties from peptidyl-tRNA molecules trapped in stalled 50S ribosomal subunits, and thus maintains levels of free tRNAs and 50S ribosomes. This Afipia carboxidovorans (strain ATCC 49405 / DSM 1227 / KCTC 32145 / OM5) (Oligotropha carboxidovorans) protein is Peptidyl-tRNA hydrolase.